Reading from the N-terminus, the 380-residue chain is Kappa-type opioid receptor (380 aa).

Topologically, residues 1-57 (MESPIQIFRGDPGPTCSPSACLLPNSSSWFPNWAESDSNGSVGSEDQQLESAHISPA) are extracellular. 2 N-linked (GlcNAc...) asparagine glycosylation sites follow: Asn25 and Asn39. Residues 58–85 (IPVIITAVYSVVFVVGLVGNSLVMFVII) form a helical membrane-spanning segment. Over 86–95 (RYTKMKTATN) the chain is Cytoplasmic. The helical transmembrane segment at 96 to 119 (IYIFNLALADALVTTTMPFQSAVY) threads the bilayer. Residues 120 to 132 (LMNSWPFGDVLCK) lie on the Extracellular side of the membrane. A disulfide bridge connects residues Cys131 and Cys210. A helical transmembrane segment spans residues 133–154 (IVISIDYYNMFTSIFTLTMMSV). Residues 155–173 (DRYIAVCHPVKALDFRTPL) lie on the Cytoplasmic side of the membrane. Residues 174-196 (KAKIINICIWLLASSVGISAIVL) form a helical membrane-spanning segment. The Extracellular portion of the chain corresponds to 197 to 222 (GGTKVREDVDVIECSLQFPDDEYSWW). A helical membrane pass occupies residues 223-247 (DLFMKICVFVFAFVIPVLIIIVCYT). The Cytoplasmic segment spans residues 248 to 274 (LMILRLKSVRLLSGSREKDRNLRRITK). A helical transmembrane segment spans residues 275-296 (LVLVVVAVFIICWTPIHIFILV). Topologically, residues 297–311 (EALGSTSHSTAALSS) are extracellular. The helical transmembrane segment at 312 to 333 (YYFCIALGYTNSSLNPVLYAFL) threads the bilayer. At 334–380 (DENFKRCFRDFCFPIKMRMERQSTNRVRNTVQDPASMRDVGGMNKPV) the chain is on the cytoplasmic side. Cys345 is lipidated: S-palmitoyl cysteine.

This sequence belongs to the G-protein coupled receptor 1 family. Interacts with NHERF1. Interacts with GABARAPL1. Detected in brain (at protein level). Brain (neocortex, hippocampus, amygdala, medial habenula, hypothalamus, locus ceruleus, and parabrachial nucleus).

It is found in the cell membrane. Its function is as follows. G-protein coupled opioid receptor that functions as a receptor for endogenous alpha-neoendorphins and dynorphins, but has low affinity for beta-endorphins. Also functions as a receptor for various synthetic opioids and for the psychoactive diterpene salvinorin A. Ligand binding causes a conformation change that triggers signaling via guanine nucleotide-binding proteins (G proteins) and modulates the activity of down-stream effectors, such as adenylate cyclase. Signaling leads to the inhibition of adenylate cyclase activity. Inhibits neurotransmitter release by reducing calcium ion currents and increasing potassium ion conductance. Plays a role in the perception of pain. Plays a role in mediating reduced physical activity upon treatment with synthetic opioids. Plays a role in the regulation of salivation in response to synthetic opioids. May play a role in arousal and regulation of autonomic and neuroendocrine functions. This is Kappa-type opioid receptor (Oprk1) from Mus musculus (Mouse).